The chain runs to 441 residues: Eukaryotic translation initiation factor 3 subunit M (441 aa).

Residues 196 to 365 (ESEQAYTYLL…QTFLIHRSTY (170 aa)) form the PCI domain. The segment covering 405 to 418 (KEEEANKADNKYDS) has biased composition (basic and acidic residues). Residues 405-441 (KEEEANKADNKYDSARGFQRGGQRKQPRALDDDMGLE) are disordered.

This sequence belongs to the eIF-3 subunit M family. Component of the eukaryotic translation initiation factor 3 (eIF-3) complex.

The protein localises to the cytoplasm. In terms of biological role, component of the eukaryotic translation initiation factor 3 (eIF-3) complex, which is involved in protein synthesis of a specialized repertoire of mRNAs and, together with other initiation factors, stimulates binding of mRNA and methionyl-tRNAi to the 40S ribosome. The eIF-3 complex specifically targets and initiates translation of a subset of mRNAs involved in cell proliferation. This is Eukaryotic translation initiation factor 3 subunit M from Phaeosphaeria nodorum (strain SN15 / ATCC MYA-4574 / FGSC 10173) (Glume blotch fungus).